Reading from the N-terminus, the 393-residue chain is Formate-dependent phosphoribosylglycinamide formyltransferase (393 aa).

N(1)-(5-phospho-beta-D-ribosyl)glycinamide contacts are provided by residues 17–18 (EL) and glutamate 77. ATP contacts are provided by residues arginine 109, lysine 150, 155-160 (SSGKGQ), 190-193 (EEFL), and glutamate 198. The 191-residue stretch at 114 to 304 (DLAAGELGLR…EFELHLRAVL (191 aa)) folds into the ATP-grasp domain. Positions 263 and 275 each coordinate Mg(2+). N(1)-(5-phospho-beta-D-ribosyl)glycinamide is bound by residues aspartate 282, lysine 354, and 361–362 (RR).

It belongs to the PurK/PurT family. As to quaternary structure, homodimer.

The catalysed reaction is N(1)-(5-phospho-beta-D-ribosyl)glycinamide + formate + ATP = N(2)-formyl-N(1)-(5-phospho-beta-D-ribosyl)glycinamide + ADP + phosphate + H(+). Its pathway is purine metabolism; IMP biosynthesis via de novo pathway; N(2)-formyl-N(1)-(5-phospho-D-ribosyl)glycinamide from N(1)-(5-phospho-D-ribosyl)glycinamide (formate route): step 1/1. Functionally, involved in the de novo purine biosynthesis. Catalyzes the transfer of formate to 5-phospho-ribosyl-glycinamide (GAR), producing 5-phospho-ribosyl-N-formylglycinamide (FGAR). Formate is provided by PurU via hydrolysis of 10-formyl-tetrahydrofolate. In Synechococcus sp. (strain RCC307), this protein is Formate-dependent phosphoribosylglycinamide formyltransferase.